A 338-amino-acid polypeptide reads, in one-letter code: Malate dehydrogenase, mitochondrial (338 aa).

Residues 1-24 (MLSALARPASAALRRSFSTSAQNN) constitute a mitochondrion transit peptide. NAD(+) is bound by residues 31-37 (GASGGIG) and aspartate 57. Serine 33 carries O-linked (GlcNAc) serine glycosylation. An N6-acetyllysine; alternate mark is found at lysine 78 and lysine 91. N6-succinyllysine; alternate occurs at positions 78 and 91. 2 residues coordinate substrate: arginine 104 and arginine 110. NAD(+) contacts are provided by residues asparagine 117 and 140-142 (IAN). Asparagine 142 provides a ligand contact to substrate. Lysine 165 bears the N6-acetyllysine mark. Arginine 176 serves as a coordination point for substrate. Lysine 185 carries the post-translational modification N6-acetyllysine; alternate. Lysine 185 is modified (N6-succinyllysine; alternate). The active-site Proton acceptor is histidine 200. At lysine 203 the chain carries N6-succinyllysine. N6-acetyllysine; alternate occurs at positions 215 and 239. Residues lysine 215 and lysine 239 each carry the N6-succinyllysine; alternate modification. An N6-malonyllysine; alternate modification is found at lysine 239. Position 246 is a phosphoserine (serine 246). Residue methionine 251 participates in NAD(+) binding. Lysine 269 is subject to N6-succinyllysine. 5 positions are modified to N6-acetyllysine; alternate: lysine 296, lysine 301, lysine 307, lysine 314, and lysine 324. Residues lysine 296, lysine 301, lysine 307, lysine 314, and lysine 324 each carry the N6-succinyllysine; alternate modification. Residue lysine 307 is modified to N6-malonyllysine; alternate. Serine 326 carries the post-translational modification Phosphoserine. N6-acetyllysine; alternate occurs at positions 328, 329, and 335. Lysine 328 is subject to N6-succinyllysine; alternate. Lysine 329 is subject to N6-malonyllysine; alternate. Position 335 is an N6-succinyllysine; alternate (lysine 335).

Belongs to the LDH/MDH superfamily. MDH type 1 family. Homodimer. Acetylation is enhanced by up to 67% after treatment either with trichostin A (TSA) or with nicotinamide (NAM) with the appearance of tri- and tetraacetylations. Glucose also increases acetylation by about 60%.

It localises to the mitochondrion matrix. The enzyme catalyses (S)-malate + NAD(+) = oxaloacetate + NADH + H(+). With respect to regulation, enzyme activity is enhanced by acetylation. In Homo sapiens (Human), this protein is Malate dehydrogenase, mitochondrial (MDH2).